The following is a 253-amino-acid chain: Pimeloyl-[acyl-carrier protein] methyl ester esterase (253 aa).

Residues tryptophan 18, 78–79 (SL), and 139–143 (FLALD) each bind substrate. Catalysis depends on serine 78, which acts as the Nucleophile. Catalysis depends on residues aspartate 203 and histidine 231. Substrate is bound at residue histidine 231.

Belongs to the AB hydrolase superfamily. Carboxylesterase BioH family. As to quaternary structure, monomer.

Its subcellular location is the cytoplasm. It carries out the reaction 6-carboxyhexanoyl-[ACP] methyl ester + H2O = 6-carboxyhexanoyl-[ACP] + methanol + H(+). Its pathway is cofactor biosynthesis; biotin biosynthesis. Functionally, the physiological role of BioH is to remove the methyl group introduced by BioC when the pimeloyl moiety is complete. It allows to synthesize pimeloyl-ACP via the fatty acid synthetic pathway through the hydrolysis of the ester bonds of pimeloyl-ACP esters. This is Pimeloyl-[acyl-carrier protein] methyl ester esterase from Xanthomonas campestris pv. campestris (strain 8004).